The chain runs to 204 residues: Arginine exporter protein ArgO (204 aa).

A run of 6 helical transmembrane segments spans residues 1–21 (MFAV…PLGP), 37–57 (LMVA…GIFG), 67–87 (LLLG…GWGA), 111–131 (IIAT…DTFV), 147–167 (WFAL…ALLA), and 179–199 (VQRV…LQLA).

It belongs to the LysE/ArgO transporter (TC 2.A.75) family.

It localises to the cell inner membrane. It carries out the reaction L-arginine(in) = L-arginine(out). In terms of biological role, involved in the export of arginine. Important to control the intracellular level of arginine and the correct balance between arginine and lysine. In Pectobacterium carotovorum subsp. carotovorum (strain PC1), this protein is Arginine exporter protein ArgO.